A 352-amino-acid polypeptide reads, in one-letter code: Thiamine-phosphate synthase (352 aa).

The tract at residues 1–128 (MNPTPSETSL…AAEAAAIRYG (128 aa)) is unknown. Residues 63–85 (SYKQARSTSTDTGAGLKHPAQLD) form a disordered region. Residues 129 to 352 (LYDLEVTCLN…LLQQLDQATI (224 aa)) form a thiamine-phosphate synthase region. 4-amino-2-methyl-5-(diphosphooxymethyl)pyrimidine contacts are provided by residues 180–184 (QYRCK) and Asn-212. Mg(2+) is bound by residues Asp-213 and Asp-232. 2 residues coordinate 4-amino-2-methyl-5-(diphosphooxymethyl)pyrimidine: Ser-251 and Lys-280. Gly-307 contributes to the 2-[(2R,5Z)-2-carboxy-4-methylthiazol-5(2H)-ylidene]ethyl phosphate binding site.

The protein belongs to the thiamine-phosphate synthase family. Mg(2+) is required as a cofactor.

The catalysed reaction is 2-[(2R,5Z)-2-carboxy-4-methylthiazol-5(2H)-ylidene]ethyl phosphate + 4-amino-2-methyl-5-(diphosphooxymethyl)pyrimidine + 2 H(+) = thiamine phosphate + CO2 + diphosphate. It carries out the reaction 2-(2-carboxy-4-methylthiazol-5-yl)ethyl phosphate + 4-amino-2-methyl-5-(diphosphooxymethyl)pyrimidine + 2 H(+) = thiamine phosphate + CO2 + diphosphate. It catalyses the reaction 4-methyl-5-(2-phosphooxyethyl)-thiazole + 4-amino-2-methyl-5-(diphosphooxymethyl)pyrimidine + H(+) = thiamine phosphate + diphosphate. Its pathway is cofactor biosynthesis; thiamine diphosphate biosynthesis; thiamine phosphate from 4-amino-2-methyl-5-diphosphomethylpyrimidine and 4-methyl-5-(2-phosphoethyl)-thiazole: step 1/1. Condenses 4-methyl-5-(beta-hydroxyethyl)thiazole monophosphate (THZ-P) and 2-methyl-4-amino-5-hydroxymethyl pyrimidine pyrophosphate (HMP-PP) to form thiamine monophosphate (TMP). This chain is Thiamine-phosphate synthase, found in Synechococcus sp. (strain CC9605).